The chain runs to 359 residues: Probable dual-specificity RNA methyltransferase RlmN (359 aa).

The active-site Proton acceptor is Glu93. One can recognise a Radical SAM core domain in the interval 107 to 337; that stretch reads KSERVTLCVS…VTMRYEKGHD (231 aa). The cysteines at positions 114 and 342 are disulfide-linked. Residues Cys121, Cys125, and Cys128 each contribute to the [4Fe-4S] cluster site. Residues 168–169, Ser200, 223–225, and Asn299 each bind S-adenosyl-L-methionine; these read GE and SLH. Catalysis depends on Cys342, which acts as the S-methylcysteine intermediate.

This sequence belongs to the radical SAM superfamily. RlmN family. The cofactor is [4Fe-4S] cluster.

The protein resides in the cytoplasm. The catalysed reaction is adenosine(2503) in 23S rRNA + 2 reduced [2Fe-2S]-[ferredoxin] + 2 S-adenosyl-L-methionine = 2-methyladenosine(2503) in 23S rRNA + 5'-deoxyadenosine + L-methionine + 2 oxidized [2Fe-2S]-[ferredoxin] + S-adenosyl-L-homocysteine. It carries out the reaction adenosine(37) in tRNA + 2 reduced [2Fe-2S]-[ferredoxin] + 2 S-adenosyl-L-methionine = 2-methyladenosine(37) in tRNA + 5'-deoxyadenosine + L-methionine + 2 oxidized [2Fe-2S]-[ferredoxin] + S-adenosyl-L-homocysteine. Specifically methylates position 2 of adenine 2503 in 23S rRNA and position 2 of adenine 37 in tRNAs. The sequence is that of Probable dual-specificity RNA methyltransferase RlmN from Akkermansia muciniphila (strain ATCC BAA-835 / DSM 22959 / JCM 33894 / BCRC 81048 / CCUG 64013 / CIP 107961 / Muc).